Reading from the N-terminus, the 531-residue chain is Probable calcium-binding mitochondrial carrier F17E5.2 (531 aa).

4 EF-hand domains span residues 70–105 (EKEK…QAHI), 106–135 (PASV…NYVI), 136–171 (AHEA…MGVN), and 172–207 (LDDQ…YPST). Ca(2+) is bound by residues aspartate 83, aspartate 85, aspartate 87, serine 89, and aspartate 94. Ca(2+)-binding residues include aspartate 149, asparagine 151, aspartate 153, glutamate 155, and glutamate 160. Solcar repeat units lie at residues 242 to 328 (GVWW…IKRW), 338 to 424 (LSTI…LKSM), and 435 to 525 (PGVL…VRKQ). The next 6 membrane-spanning stretches (helical) occupy residues 248–265 (LVAG…TAPF), 303–322 (GNGI…FMCY), 348–361 (SSAG…IYPM), 399–418 (GYLP…LTVY), 441–458 (LACG…SYPL), and 500–517 (GITP…ISYV).

It belongs to the mitochondrial carrier (TC 2.A.29) family.

Its subcellular location is the mitochondrion inner membrane. In terms of biological role, calcium-dependent mitochondrial solute carrier. The chain is Probable calcium-binding mitochondrial carrier F17E5.2 from Caenorhabditis elegans.